A 238-amino-acid polypeptide reads, in one-letter code: MEEAKIPMLELGPITFNLTLLAVCIVTIAVIFAFVFWASRQMKLKPEGKQTALEYLISFVDGIGEEHLDHNLQKSYSLLLFTIFLFVAVANNLGLFTKLETVNGYNLWTSPTANLAFDLALSLFITLMVHIEGVRRRGLVAHLKRLATPWPMTPMNLLEEFTNFLSLAIRLFGNIFAGEVVTGLIVQLANYRVYWWPIAFLVNMAWTAFSVFISCIQAFVFTKLTATYLGKKVNESEE.

Helical transmembrane passes span 18 to 38, 76 to 96, 114 to 134, 166 to 186, and 193 to 213; these read LTLLAVCIVTIAVIFAFVFWA, YSLLLFTIFLFVAVANNLGLF, NLAFDLALSLFITLMVHIEGV, SLAIRLFGNIFAGEVVTGLIV, and VYWWPIAFLVNMAWTAFSVFI.

Belongs to the ATPase A chain family. F-type ATPases have 2 components, CF(1) - the catalytic core - and CF(0) - the membrane proton channel. CF(1) has five subunits: alpha(3), beta(3), gamma(1), delta(1), epsilon(1). CF(0) has three main subunits: a(1), b(2) and c(9-12). The alpha and beta chains form an alternating ring which encloses part of the gamma chain. CF(1) is attached to CF(0) by a central stalk formed by the gamma and epsilon chains, while a peripheral stalk is formed by the delta and b chains.

The protein localises to the cell membrane. In terms of biological role, key component of the proton channel; it plays a direct role in the translocation of protons across the membrane. The chain is ATP synthase subunit a from Streptococcus pyogenes serotype M5 (strain Manfredo).